We begin with the raw amino-acid sequence, 416 residues long: Diaminobutyrate--2-oxoglutarate transaminase (416 aa).

Lys-263 carries the post-translational modification N6-(pyridoxal phosphate)lysine.

This sequence belongs to the class-III pyridoxal-phosphate-dependent aminotransferase family. Pyridoxal 5'-phosphate serves as cofactor.

It carries out the reaction L-2,4-diaminobutanoate + 2-oxoglutarate = L-aspartate 4-semialdehyde + L-glutamate. It participates in amine and polyamine biosynthesis; ectoine biosynthesis; L-ectoine from L-aspartate 4-semialdehyde: step 1/3. In terms of biological role, catalyzes reversively the conversion of L-aspartate beta-semialdehyde (ASA) to L-2,4-diaminobutyrate (DABA) by transamination with L-glutamate. This is Diaminobutyrate--2-oxoglutarate transaminase (ectB) from Virgibacillus pantothenticus.